A 507-amino-acid chain; its full sequence is Glycerol kinase (507 aa).

ADP is bound at residue Thr15. Positions 15, 16, and 17 each coordinate ATP. Thr15 lines the sn-glycerol 3-phosphate pocket. Arg19 contacts ADP. Sn-glycerol 3-phosphate-binding residues include Arg85, Glu86, Tyr137, and Asp250. Arg85, Glu86, Tyr137, Asp250, and Gln251 together coordinate glycerol. The ADP site is built by Thr272, Gly316, and Gly418. 3 residues coordinate ATP: Thr272, Gly316, and Gly418.

It belongs to the FGGY kinase family.

The enzyme catalyses glycerol + ATP = sn-glycerol 3-phosphate + ADP + H(+). Its pathway is polyol metabolism; glycerol degradation via glycerol kinase pathway; sn-glycerol 3-phosphate from glycerol: step 1/1. Inhibited by fructose 1,6-bisphosphate (FBP). Key enzyme in the regulation of glycerol uptake and metabolism. Catalyzes the phosphorylation of glycerol to yield sn-glycerol 3-phosphate. The sequence is that of Glycerol kinase from Malacoplasma penetrans (strain HF-2) (Mycoplasma penetrans).